The primary structure comprises 366 residues: NADH-quinone oxidoreductase subunit D (366 aa).

It belongs to the complex I 49 kDa subunit family. NDH-1 is composed of 14 different subunits. Subunits NuoB, C, D, E, F, and G constitute the peripheral sector of the complex.

It is found in the cell membrane. The catalysed reaction is a quinone + NADH + 5 H(+)(in) = a quinol + NAD(+) + 4 H(+)(out). In terms of biological role, NDH-1 shuttles electrons from NADH, via FMN and iron-sulfur (Fe-S) centers, to quinones in the respiratory chain. The immediate electron acceptor for the enzyme in this species is believed to be a menaquinone. Couples the redox reaction to proton translocation (for every two electrons transferred, four hydrogen ions are translocated across the cytoplasmic membrane), and thus conserves the redox energy in a proton gradient. In Bacillus anthracis, this protein is NADH-quinone oxidoreductase subunit D.